The sequence spans 815 residues: MNAPSTMTDKKPEVEHLQGENPPKDTYSAEDTATAILRKKRKPNSLVVDDATNDDNSVITLSSNTMETLQLFRGDTVVVKGKRRKDTVLIVLTDEEMEDGVARINRVVRNNLRVRLGDIVTINPCPDIKYAERISVLPLADTVEGLTGSLFDVYLKPYFVEAYRPIRKGDLFVVRGSMRQVEFKVVDVAPDEFGIVSQDTIIHWEGEPINREDEESSLAEVGYDDIGGCRRQMAQIRELVELPLRHPQLFKSIGIKPPRGILMYGPPGTGKTLMARAVANETGAFFFLINGPEIMSKMAGESESNLRKAFEEAEKNSPAIIFIDEIDSIAPKREKTNGEVERRVVSQLLTLMDGMKARSNVVVMAATNRPNSIDPALRRFGRFDREVDVGIPDPTGRLEILRIHTKNMKLADDVDLEQIAAETHGYVGSDLASLCSEAAMQQIREKMDMIDLDEDEIDAEVLDSLGVTMDNFRFALGSSNPSALRETVVEVPNVRWEDIGGLEEVKRELRETVQMPVMYAEKFLRFGVTPSKGVLFFGPPGTGKTLLAKAIANECSANFISVKGPELLSMWFGESESNVRDIFDKARAAAPCVVFLDELDSIAKARGASAGDSGGGDRVVNQLLTEMDGVNSKKNVFVIGATNRPDQIDPALMRPGRLDQLIYVPLPDEEARFSILQTQLRHTPVAEDVDLRAVAKATHGFSGADLEFVVQRAVKLAIKDSIEEDIKRENETGEAPADDVVMDEDASVSQVQRHHVEEAMKMARRSVSDAEVRRYEAYAHQLLTSRGLTGFQFDSADSNTNGPSFGNDGADDLYA.

Residues 1–30 (MNAPSTMTDKKPEVEHLQGENPPKDTYSAE) are disordered. Over residues 8–18 (TDKKPEVEHLQ) the composition is skewed to basic and acidic residues. ATP contacts are provided by residues 267–273 (PGTGKTL), Asn-368, His-404, and 541–546 (GTGKTL). The interval 794–815 (DSADSNTNGPSFGNDGADDLYA) is disordered. A compositionally biased stretch (polar residues) spans 795–804 (SADSNTNGPS).

The protein belongs to the AAA ATPase family. In terms of assembly, component of the ribosome quality control complex (RQC), composed of the E3 ubiquitin ligase rkr1/ltn1, rqc1 and mtr1/rqc2, as well as cdc48 and its ubiquitin-binding cofactors. RQC forms a stable complex with 60S ribosomal subunits. Interacts with ubx2 and ubx3. Interacts with lub1. Interacts with rbd2 (via C-terminal SHP box); the interaction is required for rbd2-mediated cleavage of sre1 and sre2.

It localises to the cytoplasm. Its subcellular location is the nucleus. The catalysed reaction is ATP + H2O = ADP + phosphate + H(+). With respect to regulation, the first ATP-binding region has low ATPase activity. The second ATP-binding region is responsible for ATPase activity. ATP binding to the first ATP-binding region induces intrinsic activity of the second ATP-binding region. While ATP binding to the first ATP-binding region appears to prevent ATP hydrolysis by the second ATP-binding region, ADP-binding to first region promotes the coordinate and cooperative ATPase cycle of the second ATP-binding region. ATP binding to the first ATP-binding region induces a conformational change, promoting the rotation of the first ATP-binding region relative to the second ATP-binding region in the hexamer. Its function is as follows. ATP-dependent chaperone which probably uses the energy provided by ATP hydrolysis to generate mechanical force to unfold substrate proteins, disassemble protein complexes, and disaggregate protein aggregates. By recruiting and promoting the degradation of ubiquitinated proteins, plays a role in the ubiquitin fusion degradation (UFD) pathway. Has a role in the endoplasmic reticulum-associated degradation (ERAD) pathway which mediates the cytoplasmic elimination of misfolded proteins exported from the ER. Involved in spindle disassembly. Component of the ribosome quality control complex (RQC), a ribosome-associated complex that mediates ubiquitination and extraction of incompletely synthesized nascent chains for proteasomal degradation. CDC48 may provide the mechanical force that dislodges the polyubiquitinated nascent peptides from the exit channel. Required for ribophagy, a process which relocalizes ribosomal particles into the vacuole for degradation in response to starvation. Has a role in substrate recognition mediating rbd2-dependent cleavage of sterol regulatory element-binding protein sre1 and sre2. This chain is Cell division cycle protein 48, found in Schizosaccharomyces pombe (strain 972 / ATCC 24843) (Fission yeast).